We begin with the raw amino-acid sequence, 161 residues long: uncharacterized protein (161 aa).

Residues 1 to 27 form the signal peptide; sequence MKKIGLLFMLCLAALFTIGFPAQQADA.

The protein localises to the secreted. This is an uncharacterized protein from Bacillus subtilis (strain 168).